The chain runs to 299 residues: UDP-N-acetylenolpyruvoylglucosamine reductase (299 aa).

An FAD-binding PCMH-type domain is found at 28-193 (KVGGPADILA…LSAKFELQAG (166 aa)). Residue arginine 172 is part of the active site. The active-site Proton donor is serine 222. The active site involves glutamate 292.

Belongs to the MurB family. It depends on FAD as a cofactor.

It localises to the cytoplasm. The catalysed reaction is UDP-N-acetyl-alpha-D-muramate + NADP(+) = UDP-N-acetyl-3-O-(1-carboxyvinyl)-alpha-D-glucosamine + NADPH + H(+). It participates in cell wall biogenesis; peptidoglycan biosynthesis. Cell wall formation. This chain is UDP-N-acetylenolpyruvoylglucosamine reductase, found in Lactococcus lactis subsp. cremoris (strain SK11).